A 1755-amino-acid chain; its full sequence is Transposon Ty1-NL1 Gag-Pol polyprotein (1755 aa).

4 stretches are compositionally biased toward polar residues: residues 1 to 23, 48 to 60, 71 to 86, and 131 to 152; these read MESQ…SVTS, TKAN…TPAS, SPQT…GPYQ, and PQYP…GNTF. Disordered stretches follow at residues 1 to 86, 131 to 171, and 350 to 420; these read MESQ…GPYQ, PQYP…YVRP, and QQES…IRGS. Low complexity predominate over residues 153–165; the sequence is TDSSSADSDMTST. The RNA-binding stretch occupies residues 299–401; sequence NNGIPINNKV…NSQSRTARAH (103 aa). Residues 363–372 show a composition bias toward basic and acidic residues; it reads NPSDEKKDSR. Positions 373–412 are enriched in polar residues; it reads TYTNTTKPKSITRNSQKPNNSQSRTARAHNVSTSNNSSGP. Asp-461 acts as the For protease activity; shared with dimeric partner in catalysis. An integrase-type zinc finger-like region spans residues 583 to 640; sequence NVHTSESTRKYPYPFIHRMLAHANAQTIRYSLKNNTITYFNESDVDWSSAIDYQCPDC. In terms of domain architecture, Integrase catalytic spans 660–835; sequence NSYEPFQYLH…AGLDISTLLP (176 aa). Asp-671 and Asp-736 together coordinate Mg(2+). Disordered stretches follow at residues 956-1120 and 1146-1172; these read SKAV…TCPK and DSFK…SNAY. The segment covering 960 to 969 has biased composition (low complexity); it reads SPTDSTPPST. Positions 1005–1015 are enriched in polar residues; that stretch reads STPQISDIEST. Residues 1038-1053 are compositionally biased toward basic and acidic residues; sequence ESSHTSKSKDFRHSDS. Polar residues-rich tracts occupy residues 1054 to 1082 and 1095 to 1106; these read YSDN…QTSE and SIDTSSSESNSL. The Bipartite nuclear localization signal signature appears at 1178 to 1212; the sequence is KKRSLEDNETEIKVSRDTWNTKNMRSLEPPRSKKR. A Reverse transcriptase Ty1/copia-type domain is found at 1338–1476; it reads NNYYITQLDI…DILGLEIKYQ (139 aa). The Mg(2+) site is built by Asp-1346, Asp-1427, Asp-1428, Asp-1610, Glu-1652, and Asp-1685. The RNase H Ty1/copia-type domain maps to 1610–1752; sequence DASYGNQPYY…IKTFKLLTNK (143 aa).

The capsid protein forms a homotrimer, from which the VLPs are assembled. The protease is a homodimer, whose active site consists of two apposed aspartic acid residues. In terms of processing, initially, virus-like particles (VLPs) are composed of the structural unprocessed proteins Gag and Gag-Pol, and also contain the host initiator methionine tRNA (tRNA(i)-Met) which serves as a primer for minus-strand DNA synthesis, and a dimer of genomic Ty RNA. Processing of the polyproteins occurs within the particle and proceeds by an ordered pathway, called maturation. First, the protease (PR) is released by autocatalytic cleavage of the Gag-Pol polyprotein yielding capsid protein p45 and a Pol-p154 precursor protein. This cleavage is a prerequisite for subsequent processing of Pol-p154 at the remaining sites to release the mature structural and catalytic proteins. Maturation takes place prior to the RT reaction and is required to produce transposition-competent VLPs.

Its subcellular location is the cytoplasm. The protein resides in the nucleus. It carries out the reaction DNA(n) + a 2'-deoxyribonucleoside 5'-triphosphate = DNA(n+1) + diphosphate. The catalysed reaction is Endonucleolytic cleavage to 5'-phosphomonoester.. Functionally, capsid protein (CA) is the structural component of the virus-like particle (VLP), forming the shell that encapsulates the retrotransposons dimeric RNA genome. The particles are assembled from trimer-clustered units and there are holes in the capsid shells that allow for the diffusion of macromolecules. CA also has nucleocapsid-like chaperone activity, promoting primer tRNA(i)-Met annealing to the multipartite primer-binding site (PBS), dimerization of Ty1 RNA and initiation of reverse transcription. Its function is as follows. The aspartyl protease (PR) mediates the proteolytic cleavages of the Gag and Gag-Pol polyproteins after assembly of the VLP. Reverse transcriptase/ribonuclease H (RT) is a multifunctional enzyme that catalyzes the conversion of the retro-elements RNA genome into dsDNA within the VLP. The enzyme displays a DNA polymerase activity that can copy either DNA or RNA templates, and a ribonuclease H (RNase H) activity that cleaves the RNA strand of RNA-DNA heteroduplexes during plus-strand synthesis and hydrolyzes RNA primers. The conversion leads to a linear dsDNA copy of the retrotransposon that includes long terminal repeats (LTRs) at both ends. In terms of biological role, integrase (IN) targets the VLP to the nucleus, where a subparticle preintegration complex (PIC) containing at least integrase and the newly synthesized dsDNA copy of the retrotransposon must transit the nuclear membrane. Once in the nucleus, integrase performs the integration of the dsDNA into the host genome. The protein is Transposon Ty1-NL1 Gag-Pol polyprotein (TY1B-NL1) of Saccharomyces cerevisiae (strain ATCC 204508 / S288c) (Baker's yeast).